The primary structure comprises 92 residues: UPF0213 protein M28_Spy1146 (92 aa).

Residues 4–80 (KKAYMYVLEC…KRKTRSQKLA (77 aa)) enclose the GIY-YIG domain.

The protein belongs to the UPF0213 family.

In Streptococcus pyogenes serotype M28 (strain MGAS6180), this protein is UPF0213 protein M28_Spy1146.